Consider the following 283-residue polypeptide: Pre-protein-C8 (283 aa).

Residues 1–40 (MKEDNNTSEESGRINRRNVLKTVGAAGLFAAGSTGMAAAA) constitute a signal peptide (tat-type signal). The tract at residues 61–75 (ARELAKTPAFRELAQ) is helix-loop-helix (HLH) region.

As to quaternary structure, immunity protein HalI interacts with Halocin-C8; the interaction is direct. Post-translationally, predicted to be exported by the Tat system. The position of the signal peptide cleavage has not been experimentally proven.

The protein localises to the secreted. It localises to the cell membrane. In terms of biological role, has antibacterial activity against a wide variety of haloarchaeons. Causes cell lysis and death, possibly by disrupting the cell wall. Its function is as follows. Acts as an immunity protein for halocin-C8. Able to block the halocin-C8 activity by sequestering the activity of halocin-C8 through specific and direct binding. In Halobacterium sp. (strain AS7092), this protein is Pre-protein-C8 (proC8).